Here is a 140-residue protein sequence, read N- to C-terminus: uncharacterized protein (140 aa).

Tandem repeats lie at residues 1–10 (MFARLCPVSE), 11–20 (TFGRLCPVSE), 21–30 (TFARLCPVSE), 31–40 (TFARLCPVSE), 41–50 (TFARLCPVSE), 51–60 (TFGRLCPVSE), 61–70 (MFGRLSPVSE), 71–80 (TFGRLCPVSE), 81–90 (TFGRLCPVSE), 91–100 (MFARLCPVSE), 101–110 (TFGRLSPVSE), 111–120 (MFGRLCPVSE), 121–130 (MFGRLCPVSE), and 131–140 (MFGRLCPVIT). Residues 1 to 140 (MFARLCPVSE…MFGRLCPVIT (140 aa)) form a 14 X 10 AA tandem repeats of [MT]-F-[AG]-R-L-[CS]-P-V-[SI]-[ET] region.

This is an uncharacterized protein from Homo sapiens (Human).